The sequence spans 350 residues: Anthranilate phosphoribosyltransferase (350 aa).

Residues Gly-88, 91 to 92, Thr-96, 98 to 101, 116 to 124, and Ser-128 each bind 5-phospho-alpha-D-ribose 1-diphosphate; these read GD, NIST, and KHGGRSVSS. Gly-88 contributes to the anthranilate binding site. Ser-100 is a binding site for Mg(2+). Residue Arg-174 coordinates anthranilate. Asp-233 and Glu-234 together coordinate Mg(2+).

This sequence belongs to the anthranilate phosphoribosyltransferase family. Homodimer. The cofactor is Mg(2+).

It carries out the reaction N-(5-phospho-beta-D-ribosyl)anthranilate + diphosphate = 5-phospho-alpha-D-ribose 1-diphosphate + anthranilate. It functions in the pathway amino-acid biosynthesis; L-tryptophan biosynthesis; L-tryptophan from chorismate: step 2/5. In terms of biological role, catalyzes the transfer of the phosphoribosyl group of 5-phosphorylribose-1-pyrophosphate (PRPP) to anthranilate to yield N-(5'-phosphoribosyl)-anthranilate (PRA). The chain is Anthranilate phosphoribosyltransferase from Albidiferax ferrireducens (strain ATCC BAA-621 / DSM 15236 / T118) (Rhodoferax ferrireducens).